Here is a 50-residue protein sequence, read N- to C-terminus: Protein hunchback (50 aa).

3 consecutive C2H2-type zinc fingers follow at residues 1-5, 11-33, and 39-50; these read HLRNH, FKCNKCNYACVNKSMLNSHMKSH, and YRCADCTYATKY.

Belongs to the hunchback C2H2-type zinc-finger protein family.

It is found in the nucleus. Gap class segmentation protein that controls development of head structures. In Platynereis dumerilii (Dumeril's clam worm), this protein is Protein hunchback (hb).